The chain runs to 348 residues: S-adenosylmethionine:tRNA ribosyltransferase-isomerase (348 aa).

This sequence belongs to the QueA family. As to quaternary structure, monomer.

It localises to the cytoplasm. It carries out the reaction 7-aminomethyl-7-carbaguanosine(34) in tRNA + S-adenosyl-L-methionine = epoxyqueuosine(34) in tRNA + adenine + L-methionine + 2 H(+). It participates in tRNA modification; tRNA-queuosine biosynthesis. Functionally, transfers and isomerizes the ribose moiety from AdoMet to the 7-aminomethyl group of 7-deazaguanine (preQ1-tRNA) to give epoxyqueuosine (oQ-tRNA). The sequence is that of S-adenosylmethionine:tRNA ribosyltransferase-isomerase from Tolumonas auensis (strain DSM 9187 / NBRC 110442 / TA 4).